Here is a 411-residue protein sequence, read N- to C-terminus: Zinc finger protein draculin (411 aa).

Residues 1–33 (MKNTTKPCRTEHHNAEGQRDRMEGNKKGETKAK) form a disordered region. Residues 8–32 (CRTEHHNAEGQRDRMEGNKKGETKA) show a composition bias toward basic and acidic residues. 13 C2H2-type zinc fingers span residues 36 to 58 (VACS…MRVH), 64 to 86 (YRCD…LDIH), 92 to 114 (YTCD…MTLH), 120 to 142 (YKCD…MKLH), 148 to 170 (HKCE…LMVH), 176 to 198 (YTCD…MNIH), 204 to 226 (YTCD…MRFH), 232 to 254 (FTCD…MKIH), 260 to 282 (YTCD…MTHH), 288 to 310 (FHCD…IKTH), 316 to 338 (YSCL…EKRH), 344 to 366 (FMCF…LPVH), and 372 to 394 (YMCS…EKTH).

Specifically expressed in the hematopoietic lineage during embryogenesis; first expressed at the late blastula stage around the blastoderm margin. During gastrulation, restricted to the ventral mesoderm, the presumptive prechordal plate and the dorso-marginal cells of the organizer. At the 3-somite stage, strongly expressed in a caudal domain (marking the erythroid lineage) and a cephalic domain of the lateral mesoderm. At the 8- to 10-somite stage, caudal expression is in two bands of lateral mesoderm which later converge at the midline. Anterior expression is also in two bands of lateral mesoderm which converge as two patches at the midline by the 15-somite stage, with increased scattering of single cells (macrophage precursors) away from the midline to the yolksac. Once at the yolksac, expression is lost. By 20-24 hours post-fertilization (hpf), expressed in proerythroblasts in the erythroid blood island centered above the uro-genital opening. Expression persists in circulating erythroblasts but is lost in mature erythrocytes.

The sequence is that of Zinc finger protein draculin from Danio rerio (Zebrafish).